A 636-amino-acid polypeptide reads, in one-letter code: Threonine--tRNA ligase (636 aa).

Positions 1–63 (MPMITITLPD…EHDASLRIIT (63 aa)) constitute a TGS domain. Positions 245 to 536 (DHRKIGKAQD…LIEHHAGAFP (292 aa)) are catalytic. Zn(2+) is bound by residues Cys336, His387, and His513.

The protein belongs to the class-II aminoacyl-tRNA synthetase family. As to quaternary structure, homodimer. Zn(2+) serves as cofactor.

It localises to the cytoplasm. It catalyses the reaction tRNA(Thr) + L-threonine + ATP = L-threonyl-tRNA(Thr) + AMP + diphosphate + H(+). In terms of biological role, catalyzes the attachment of threonine to tRNA(Thr) in a two-step reaction: L-threonine is first activated by ATP to form Thr-AMP and then transferred to the acceptor end of tRNA(Thr). Also edits incorrectly charged L-seryl-tRNA(Thr). The polypeptide is Threonine--tRNA ligase (Xanthomonas campestris pv. campestris (strain 8004)).